We begin with the raw amino-acid sequence, 434 residues long: Tol-Pal system protein TolB (434 aa).

The N-terminal stretch at 1–21 (MIVRRALALAALALAASPALA) is a signal peptide. The tract at residues 411–434 (GDRQTPVTSGKTDLAAPAWGPLAP) is disordered.

Belongs to the TolB family. As to quaternary structure, the Tol-Pal system is composed of five core proteins: the inner membrane proteins TolA, TolQ and TolR, the periplasmic protein TolB and the outer membrane protein Pal. They form a network linking the inner and outer membranes and the peptidoglycan layer.

The protein resides in the periplasm. Functionally, part of the Tol-Pal system, which plays a role in outer membrane invagination during cell division and is important for maintaining outer membrane integrity. The chain is Tol-Pal system protein TolB from Anaeromyxobacter sp. (strain K).